A 518-amino-acid chain; its full sequence is Trigger factor (518 aa).

Positions 170-255 constitute a PPIase FKBP-type domain; that stretch reads GDVVVIDFVG…VKGLESPQEA (86 aa). A disordered region spans residues 447–518; it reads EAPAKPAKKA…AKKAAAKKDA (72 aa). Composition is skewed to basic residues over residues 452–468 and 501–518; these read PAKK…KKAA and PAAK…KKDA.

This sequence belongs to the FKBP-type PPIase family. Tig subfamily.

The protein localises to the cytoplasm. The enzyme catalyses [protein]-peptidylproline (omega=180) = [protein]-peptidylproline (omega=0). In terms of biological role, involved in protein export. Acts as a chaperone by maintaining the newly synthesized protein in an open conformation. Functions as a peptidyl-prolyl cis-trans isomerase. The chain is Trigger factor from Maricaulis maris (strain MCS10) (Caulobacter maris).